The following is a 1733-amino-acid chain: Protein NETWORKED 1D (1733 aa).

One can recognise an NAB domain in the interval 12 to 92 (YSWWWDSHIS…ERYDHATGVI (81 aa)). 4 coiled-coil regions span residues 195–816 (KEIN…RESS), 897–931 (LIAENQDIKEASKLLEKLVSELEEENIGKQVQIDS), 960–1043 (DENS…QKLI), and 1196–1386 (ARSA…NDLM). The disordered stretch occupies residues 1456–1476 (LKTSSARRSRRRNGSLRKQNH). Residues 1460–1470 (SARRSRRRNGS) are compositionally biased toward basic residues. 2 coiled-coil regions span residues 1553–1627 (ANKR…KVQN) and 1653–1686 (SEQARRGSEKIGRLQLEIQRLQFLLLKLEGDRED). Residues 1628–1656 (GFERSDGSKSSMDLDENESSRRRRISEQA) are disordered.

The protein belongs to the NET family.

Functionally, plant-specific actin binding protein. May be part of a membrane-cytoskeletal adapter complex. This chain is Protein NETWORKED 1D, found in Arabidopsis thaliana (Mouse-ear cress).